The primary structure comprises 473 residues: Cucurbitadienol 11-hydroxylase (473 aa).

A helical membrane pass occupies residues 4 to 24 (VVLGLATLFVAYYIHWINKWR). Cys422 lines the heme pocket.

The protein belongs to the cytochrome P450 family. The cofactor is heme. In terms of tissue distribution, highly expressed in young fruits 15 days after anthesis (15-DAA). Also observed in roots.

It localises to the membrane. The enzyme catalyses cucurbitadienol + 2 reduced [NADPH--hemoprotein reductase] + 2 O2 = 11-oxocucurbitadienol + 2 oxidized [NADPH--hemoprotein reductase] + 3 H2O + 2 H(+). It carries out the reaction cucurbitadienol + reduced [NADPH--hemoprotein reductase] + O2 = 11-hydroxycucurbitadienol + oxidized [NADPH--hemoprotein reductase] + H2O + H(+). It catalyses the reaction 11-hydroxycucurbitadienol + reduced [NADPH--hemoprotein reductase] + O2 = 11-oxocucurbitadienol + oxidized [NADPH--hemoprotein reductase] + 2 H2O + H(+). The catalysed reaction is (24R)-24,25-dihydroxycucurbitadienol + reduced [NADPH--hemoprotein reductase] + O2 = mogrol + oxidized [NADPH--hemoprotein reductase] + H2O + H(+). It functions in the pathway secondary metabolite biosynthesis; terpenoid biosynthesis. Functionally, hydroxylase involved in the biosynthesis of cucurbitacin and mogroside tetracyclic triterpene natural products (e.g. siamenoside I and mogrosides IV, V and VI). Cucurbitacins have cytotoxic properties and exhibit deterrent taste as a defense barrier against herbivores. Mogrosides are nonsugar highly oxygenated compounds used as high-intensity zero-calorie sweeteners; they also possess pharmacological properties such as regulating immunity, lowering blood sugar and lipid levels, protecting the liver, and acting as antioxidants and antitumor agents. Catalyzes the oxidation of cucurbitadienol at the C-11 position to produce 11-oxocucurbitadienol, a possible biosynthetic intermediate from cucurbitadienol to mogrol. Also mediates the conversion of 24,25-dihydroxycucurbitadienol to mogrol. This is Cucurbitadienol 11-hydroxylase from Siraitia grosvenorii (Monk's fruit).